We begin with the raw amino-acid sequence, 318 residues long: L-lactate dehydrogenase (318 aa).

Residues Val-20, Asp-41, Lys-46, Tyr-71, and 85 to 86 (GA) contribute to the NAD(+) site. Substrate is bound by residues Gln-88, Arg-94, and 126–129 (NPVD). NAD(+)-binding positions include 124–126 (ATN) and Ser-149. 154-157 (DTAR) contributes to the substrate binding site. Residues Arg-159 and His-174 each coordinate beta-D-fructose 1,6-bisphosphate. His-181 functions as the Proton acceptor in the catalytic mechanism. At Tyr-226 the chain carries Phosphotyrosine. Thr-235 serves as a coordination point for substrate.

It belongs to the LDH/MDH superfamily. LDH family. Homotetramer.

Its subcellular location is the cytoplasm. It carries out the reaction (S)-lactate + NAD(+) = pyruvate + NADH + H(+). It participates in fermentation; pyruvate fermentation to lactate; (S)-lactate from pyruvate: step 1/1. With respect to regulation, allosterically activated by fructose 1,6-bisphosphate (FBP). Functionally, catalyzes the conversion of lactate to pyruvate. This Priestia megaterium (Bacillus megaterium) protein is L-lactate dehydrogenase.